The following is a 102-amino-acid chain: Co-chaperonin GroES (102 aa).

This sequence belongs to the GroES chaperonin family. As to quaternary structure, heptamer of 7 subunits arranged in a ring. Interacts with the chaperonin GroEL.

It is found in the cytoplasm. Its function is as follows. Together with the chaperonin GroEL, plays an essential role in assisting protein folding. The GroEL-GroES system forms a nano-cage that allows encapsulation of the non-native substrate proteins and provides a physical environment optimized to promote and accelerate protein folding. GroES binds to the apical surface of the GroEL ring, thereby capping the opening of the GroEL channel. The protein is Co-chaperonin GroES of Chlamydia pneumoniae (Chlamydophila pneumoniae).